The following is a 604-amino-acid chain: Putative O-acetyltransferase SACOL0978 (604 aa).

A run of 11 helical transmembrane segments spans residues 15–35 (YIPGLDGLRAIAVLGIIIYHL), 43–63 (GFLGVDTFFVISGYLITSLLL), 85–105 (LLPAVIVLLMVVGTATLLLKS), 150–170 (AIEEQFYIFFPVILVTLLLTI), 176–196 (IGFIFWGVSIISLGLMMFIYS), 212–232 (LQTLLLGVILAFLWPPFKLKN), 240–260 (YVIDSIGSLSFIVLILLFFII), 267–287 (IYDGGFYLISILTLFIIASVV), 310–330 (YSLYLWHFAVISFVHSYYVDG), 332–352 (IPVYVYFIDISLTIIFAELSY), and 377–397 (FIRMAIVVTLLIPFMLILVGA). Residues S459, D581, and H584 contribute to the active site.

This sequence belongs to the acyltransferase 3 family.

It localises to the cell membrane. This Staphylococcus aureus (strain COL) protein is Putative O-acetyltransferase SACOL0978.